The primary structure comprises 209 residues: Protein ASG7 (209 aa).

At Met-1 to Arg-49 the chain is on the lumenal side. Residues Phe-50–Phe-70 traverse the membrane as a helical segment. Residues Leu-71 to Asn-184 lie on the Cytoplasmic side of the membrane. Ser-121, Ser-123, and Ser-125 each carry phosphoserine. Residue Thr-153 is modified to Phosphothreonine. Residues Leu-185–Cys-205 traverse the membrane as a helical segment. Topologically, residues Lys-206–Arg-209 are lumenal.

It localises to the endomembrane system. Functionally, required for receptor inhibition of inappropriately expressed a-factor receptor (STE3) in MAT a cells. Inhibits signaling by relocalizing the G protein beta-gamma (STE4-STE18) subunit to intracellular membranes. May also be a mechanism for the down-regulation of the mating pheromone response after the zygotic fusion event, promoting the transition of the new diploid cell to vegetative growth. In Saccharomyces cerevisiae (strain ATCC 204508 / S288c) (Baker's yeast), this protein is Protein ASG7 (ASG7).